The following is a 219-amino-acid chain: MCGKFTLFSEFDDIIEQFNIDQFLPEGEYHPSYNVAPSQNILTIINDGSNNRLGKLRWGLIPPCAKDEKIGYKMINARAETLAEKPSFRKPLGSKRCIIPADSFYEWKRLDPKTKIPMRIKLKSSNLFAFAGLYEKWNTLEGNLLYTCTIITIKPSELMEDIHDRMPVILTDENKKEWLNPKNTDPDYLQSLLLPYDADDMEAYQVSSLVNSPELIESH.

Catalysis depends on Cys-2, which acts as the Nucleophile. Cys-2 carries the post-translational modification Thiazolidine linkage to a ring-opened DNA abasic site. Glu-106 is a catalytic residue.

This sequence belongs to the SOS response-associated peptidase family.

Formation and reversal of DNA-protein cross-link depends on DNA context. Catalyzes formation of the thiazolidine linkage in presence of abasic sites in single-stranded DNA. Mediates the reversal of the thiazolidine cross-link in presence of double stranded DNA. Functionally, sensor of abasic sites in single-stranded DNA (ssDNA) required to preserve genome integrity by promoting error-free repair of abasic sites. Recognizes and binds abasic sites in ssDNA at replication forks and chemically modifies the lesion by forming a covalent cross-link with DNA: forms a stable thiazolidine linkage between a ring-opened abasic site and the alpha-amino and sulfhydryl substituents of its N-terminal catalytic cysteine residue. The DNA-protein cross-link is then reversed: able to catalyze the reversal of the thiazolidine cross-link and cycle between a cross-link and a non-cross-linked state depending on DNA context: mediates self-reversal of the thiazolidine cross-link in double stranded DNA. May act as a protease: mediates autocatalytic processing of its N-terminal methionine in order to expose the catalytic cysteine. This chain is Abasic site processing protein YobE (yobE), found in Bacillus subtilis (strain 168).